The primary structure comprises 463 residues: Quinolone resistance protein NorB (463 aa).

The next 14 helical transmembrane spans lie at 17–37 (IGIV…VNVV), 53–73 (IAVS…GGLA), 86–106 (IILN…LLLI), 107–127 (IGRL…LSII), 142–162 (YWSI…GAVA), 165–185 (LGWR…LFLI), 201–221 (FDIK…ILIT), 230–250 (SLLF…FIVL), 273–293 (TASN…NTFV), 299–319 (YSSL…LIMI), 334–354 (PMLI…LTFL), 357–377 (ILYV…LGIY), 403–423 (MASA…YAIV), and 435–455 (IALW…LLLV).

Belongs to the major facilitator superfamily. TCR/Tet family.

The protein localises to the cell membrane. Multidrug efflux pump that acts independently of NorA and is one of the factors that confers resistance against diverse quinolones and chemical compounds. The protein is Quinolone resistance protein NorB (norB) of Staphylococcus aureus (strain Mu3 / ATCC 700698).